The chain runs to 652 residues: Small ribosomal subunit protein mS39 (652 aa).

The N-terminal 37 residues, 1–37, are a transit peptide targeting the mitochondrion; the sequence is MYLSRQLRLLPRANIACSLSSSGAHYTTAAPAEDAPI. PPR repeat units lie at residues 129-163, 225-259, 260-299, 300-338, and 547-581; these read DSVV…GNPI, TPQS…QVQL, DTNT…KLRP, NLGT…GVNP, and TGQM…QHRI.

This sequence belongs to the mitochondrion-specific ribosomal protein mS39 family.

The protein localises to the mitochondrion. In terms of biological role, mitochondrial protein that may have a role in mitochondrial translation. Essential for larval development. This is Small ribosomal subunit protein mS39 from Drosophila melanogaster (Fruit fly).